The primary structure comprises 84 residues: Putative defensin-like protein 101 (84 aa).

Positions 1–27 are cleaved as a signal peptide; sequence MDITKNIVTLLLVVLFPILFYYNNVLA. Disulfide bonds link C39/C81, C43/C67, C52/C79, and C56/C80.

Belongs to the DEFL family.

It is found in the secreted. The protein is Putative defensin-like protein 101 of Arabidopsis thaliana (Mouse-ear cress).